Here is a 134-residue protein sequence, read N- to C-terminus: Seminal plasma protein PDC-109 (134 aa).

Residues 1–25 (MALQLGLFLIWAGVSVFLQLDPVNG) form the signal peptide. Thr-36 is a glycosylation site (O-linked (GalNAc...) threonine). 2 Fibronectin type-II domains span residues 44–88 (PEDE…YCAQ) and 89–134 (RDYA…WKYC). 4 disulfide bridges follow: Cys-49–Cys-73, Cys-63–Cys-86, Cys-94–Cys-119, and Cys-108–Cys-134.

It belongs to the seminal plasma protein family. Homodimer. In terms of processing, O-linked glycan consists of Gal-GalNAc disaccharide which is modified with a sialic acid residue (macro- and/or microheterogeneity account for differences between BSP-A1 and BSP-A2). In terms of tissue distribution, major component of seminal plasma.

The protein localises to the secreted. Its function is as follows. Could enhance the fertilizing capacity of bull spermatozoa upon interaction with heparin-like glycosaminoglycans present in the female genital tract. Exhibits both simulatory and inhibitory actions on the release of pituitary gonadotropins. The chain is Seminal plasma protein PDC-109 from Bos taurus (Bovine).